The primary structure comprises 825 residues: Heterogeneous nuclear ribonucleoprotein U (825 aa).

The residue at position 2 (Ser-2) is an N-acetylserine; partial. Ser-4 is subject to Phosphoserine. One can recognise an SAP domain in the interval 8–42; the sequence is VKKLKVSELKEELKKRRLSDKGLKAELMERLQAAL. Lys-17 and Lys-21 each carry N6-acetyllysine. A disordered region spans residues 41–281; the sequence is ALDDEEAGGR…PQPPVEEEDE (241 aa). At Ser-59 the chain carries Phosphoserine; by PLK1. Ser-66 is subject to Phosphoserine. The segment covering 72-81 has biased composition (low complexity); it reads AGLEQEAAAG. Composition is skewed to acidic residues over residues 82-95, 120-134, and 140-153; these read GDEE…EEEG, PMEE…ENGD, and EGED…EGAG. Positions 159-178 are enriched in low complexity; it reads GEQQPQPPATQQQQPQQQRG. Residue Lys-186 is modified to N6-acetyllysine. Ser-187 is modified (ADP-ribosylserine). The segment covering 199-211 has biased composition (low complexity); sequence APPGARQGQQQAG. The residue at position 215 (Lys-215) is an N6-acetyllysine. The segment covering 233–266 has biased composition (basic and acidic residues); it reads GKTEQKGGDKKRGVKRPREDHGRGYFEYIEENKY. Arg-255 carries the post-translational modification Citrulline. N6-acetyllysine; alternate is present on Lys-265. Lys-265 is covalently cross-linked (Glycyl lysine isopeptide (Lys-Gly) (interchain with G-Cter in SUMO1); alternate). Lys-265 participates in a covalent cross-link: Glycyl lysine isopeptide (Lys-Gly) (interchain with G-Cter in SUMO2); alternate. The residue at position 266 (Tyr-266) is a Phosphotyrosine. A phosphoserine mark is found at Ser-267 and Ser-271. The region spanning 267–464 is the B30.2/SPRY domain; it reads SRAKSPQPPV…VEFNFGQKEK (198 aa). Position 286 is a phosphothreonine (Thr-286). Lys-352 is modified (N6-acetyllysine). An ATPase domain region spans residues 488–672; that stretch reads PKGPEEKKDC…QKLLEQYKEE (185 aa). A Glycyl lysine isopeptide (Lys-Gly) (interchain with G-Cter in SUMO2) cross-link involves residue Lys-495. 504-511 is an ATP binding site; that stretch reads GLPGAGKT. 2 positions are modified to N6-acetyllysine; alternate: Lys-516 and Lys-524. Residues Lys-516 and Lys-524 each participate in a glycyl lysine isopeptide (Lys-Gly) (interchain with G-Cter in SUMO2); alternate cross-link. The residue at position 532 (Thr-532) is a Phosphothreonine. Residue Lys-536 forms a Glycyl lysine isopeptide (Lys-Gly) (interchain with G-Cter in SUMO2) linkage. Lys-551 carries the N6-acetyllysine modification. N6-acetyllysine; alternate is present on Lys-565. Lys-565 participates in a covalent cross-link: Glycyl lysine isopeptide (Lys-Gly) (interchain with G-Cter in SUMO2); alternate. Lys-574 is covalently cross-linked (Glycyl lysine isopeptide (Lys-Gly) (interchain with G-Cter in SUMO2)). A Phosphothreonine modification is found at Thr-582. Residues Lys-609 and Lys-626 each participate in a glycyl lysine isopeptide (Lys-Gly) (interchain with G-Cter in SUMO2) cross-link. The actin-binding stretch occupies residues 611–626; that stretch reads EDYKQRTQKKAEVEGK. At Lys-635 the chain carries N6-acetyllysine; alternate. Lys-635 is covalently cross-linked (Glycyl lysine isopeptide (Lys-Gly) (interchain with G-Cter in SUMO2); alternate). Glycyl lysine isopeptide (Lys-Gly) (interchain with G-Cter in SUMO2) cross-links involve residues Lys-664 and Lys-670. The span at 671 to 683 shows a compositional bias: basic and acidic residues; sequence EESKKALPPEKKQ. Positions 671–749 are disordered; that stretch reads EESKKALPPE…GGGGGGSGGI (79 aa). Arg-702 is subject to Omega-N-methylarginine. Over residues 710-728 the composition is skewed to gly residues; the sequence is GGFNMRGGNFRGGAPGNRG. Positions 714–739 are RNA-binding RGG-box; it reads MRGGNFRGGAPGNRGGYNRRGNMPQR. An asymmetric dimethylarginine mark is found at Arg-715, Arg-720, and Arg-727. 2 positions are modified to asymmetric dimethylarginine; alternate: Arg-733 and Arg-739. Arg-733 and Arg-739 each carry omega-N-methylarginine; alternate. Arg-739 carries the dimethylated arginine; in A2780 ovarian carcinoma cell line modification. The span at 739–749 shows a compositional bias: gly residues; the sequence is RGGGGGGSGGI. Residues Arg-755 and Arg-762 each carry the asymmetric dimethylarginine modification. The tract at residues 769–799 is disordered; sequence GNYNRGGMPNRGNYNQNFRGRGNNRGYKNQS. The segment covering 778–799 has biased composition (low complexity); that stretch reads NRGNYNQNFRGRGNNRGYKNQS. Lys-814 is subject to N6-acetyllysine; alternate. Residue Lys-814 forms a Glycyl lysine isopeptide (Lys-Gly) (interchain with G-Cter in SUMO2); alternate linkage.

In terms of assembly, oligomer (via ATPase domain and RNA-binding RGG-box region); oligomerization occurs upon ATP-binding in a chromatin-associated RNAs (caRNAs)- and transcription-dependent manner and is required for chromatin decompaction. ATP hydrolysis is required to cycle from an oligomeric to monomeric state to compact chromatin. Component of the coding region determinant (CRD)-mediated complex, composed of DHX9, HNRNPU, IGF2BP1, SYNCRIP and YBX1. Identified in the spliceosome C complex. Identified in a IGF2BP1-dependent mRNP granule complex containing untranslated mRNAs. Associates with heterogeneous nuclear ribonucleoprotein (hnRNP) particles. Associates (via middle region) with the C-terminal domain (CTD) RNA polymerase II (Pol II) holoenzyme; this association occurs in a RNA-independent manner. Associates (via middle region) with the core-TFIIH basal transcription factor complex; this association inhibits the CTD phosphorylation of RNA polymerase II holoenzyme by down-regulating TFIIH kinase activity. Associates with the telomerase holoenzyme complex. Associates with spindle microtubules (MTs) in a TPX2-dependent manner. Interacts (via C-terminus) with actin; this interaction is direct and mediates association with the phosphorylated CTD of RNA polymerase II and is disrupted in presence of the long non-coding H19 RNA. Interacts with AURKA. Interacts (via C-terminus) with CBX5; this interaction is, at least in part, RNA-dependent. Interacts with CR2. Interacts with CRY1. Interacts (via C-terminus) with EP300; this interaction enhances DNA-binding to nuclear scaffold/matrix attachment region (S/MAR) elements. Interacts with ERBB4. Interacts with GEMIN5. Interacts with IGF2BP1. Interacts with IGF2BP2 and IGF2BP3. Interacts with NCL; this interaction occurs during mitosis. Interacts (via C-terminus) with NR3C1 (via C-terminus). Interacts with PLK1; this interaction induces phosphorylation of HNRNPU at Ser-59 in mitosis. Interacts with POU3F4. Interacts with SMARCA4; this interaction occurs in embryonic stem cells and stimulates global Pol II-mediated transcription. Interacts (via C-terminus) with TOP2A; this interaction protects the topoisomerase TOP2A from degradation and positively regulates the relaxation of supercoiled DNA by TOP2A in a RNA-dependent manner. Interacts with TPX2; this interaction recruits HNRNPU to spindle microtubules (MTs). Interacts with UBQLN2. Interacts (via RNA-binding RGG-box region) with ZBTB7B; the interaction facilitates the recruitment of long non-coding RNA Blnc1 by ZBTB7B. Interacts with ERCC6. As to quaternary structure, (Microbial infection) Interacts with HIV-1 protein Rev. Post-translationally, cleaved at Asp-100 by CASP3 during T-cell apoptosis, resulting in a loss of DNA- and chromatin-binding activities. Extensively phosphorylated. Phosphorylated on Ser-59 by PLK1 and dephosphorylated by protein phosphatase 2A (PP2A) in mitosis. In terms of processing, arg-739 is dimethylated, probably to asymmetric dimethylarginine. Arg-733 is dimethylated, probably to asymmetric dimethylarginine. Post-translationally, citrullinated by PADI4. As to expression, widely expressed.

The protein resides in the nucleus. Its subcellular location is the nucleus matrix. It is found in the chromosome. The protein localises to the nucleus speckle. It localises to the cytoplasm. The protein resides in the cytoskeleton. Its subcellular location is the microtubule organizing center. It is found in the centrosome. The protein localises to the centromere. It localises to the kinetochore. The protein resides in the spindle. Its subcellular location is the spindle pole. It is found in the midbody. The protein localises to the cell surface. It localises to the cytoplasmic granule. Its function is as follows. DNA- and RNA-binding protein involved in several cellular processes such as nuclear chromatin organization, telomere-length regulation, transcription, mRNA alternative splicing and stability, Xist-mediated transcriptional silencing and mitotic cell progression. Plays a role in the regulation of interphase large-scale gene-rich chromatin organization through chromatin-associated RNAs (caRNAs) in a transcription-dependent manner, and thereby maintains genomic stability. Required for the localization of the long non-coding Xist RNA on the inactive chromosome X (Xi) and the subsequent initiation and maintenance of X-linked transcriptional gene silencing during X-inactivation. Plays a role as a RNA polymerase II (Pol II) holoenzyme transcription regulator. Promotes transcription initiation by direct association with the core-TFIIH basal transcription factor complex for the assembly of a functional pre-initiation complex with Pol II in a actin-dependent manner. Blocks Pol II transcription elongation activity by inhibiting the C-terminal domain (CTD) phosphorylation of Pol II and dissociates from Pol II pre-initiation complex prior to productive transcription elongation. Positively regulates CBX5-induced transcriptional gene silencing and retention of CBX5 in the nucleus. Negatively regulates glucocorticoid-mediated transcriptional activation. Key regulator of transcription initiation and elongation in embryonic stem cells upon leukemia inhibitory factor (LIF) signaling. Involved in the long non-coding RNA H19-mediated Pol II transcriptional repression. Participates in the circadian regulation of the core clock component BMAL1 transcription. Plays a role in the regulation of telomere length. Plays a role as a global pre-mRNA alternative splicing modulator by regulating U2 small nuclear ribonucleoprotein (snRNP) biogenesis. Plays a role in mRNA stability. Component of the CRD-mediated complex that promotes MYC mRNA stabilization. Enhances the expression of specific genes, such as tumor necrosis factor TNFA, by regulating mRNA stability, possibly through binding to the 3'-untranslated region (UTR). Plays a role in mitotic cell cycle regulation. Involved in the formation of stable mitotic spindle microtubules (MTs) attachment to kinetochore, spindle organization and chromosome congression. Phosphorylation at Ser-59 by PLK1 is required for chromosome alignement and segregation and progression through mitosis. Also contributes to the targeting of AURKA to mitotic spindle MTs. Binds to double- and single-stranded DNA and RNA, poly(A), poly(C) and poly(G) oligoribonucleotides. Binds to chromatin-associated RNAs (caRNAs). Associates with chromatin to scaffold/matrix attachment region (S/MAR) elements in a chromatin-associated RNAs (caRNAs)-dependent manner. Binds to the Xist RNA. Binds the long non-coding H19 RNA. Binds to SMN1/2 pre-mRNAs at G/U-rich regions. Binds to small nuclear RNAs (snRNAs). Binds to the 3'-UTR of TNFA mRNA. Binds (via RNA-binding RGG-box region) to the long non-coding Xist RNA; this binding is direct and bridges the Xist RNA and the inactive chromosome X (Xi). Also negatively regulates embryonic stem cell differentiation upon LIF signaling. Required for embryonic development. Binds to brown fat long non-coding RNA 1 (Blnc1); facilitates the recruitment of Blnc1 by ZBTB7B required to drive brown and beige fat development and thermogenesis. Functionally, (Microbial infection) Negatively regulates immunodeficiency virus type 1 (HIV-1) replication by preventing the accumulation of viral mRNA transcripts in the cytoplasm. The polypeptide is Heterogeneous nuclear ribonucleoprotein U (Homo sapiens (Human)).